The chain runs to 121 residues: Ribonuclease P protein component (121 aa).

It belongs to the RnpA family. As to quaternary structure, consists of a catalytic RNA component (M1 or rnpB) and a protein subunit.

It catalyses the reaction Endonucleolytic cleavage of RNA, removing 5'-extranucleotides from tRNA precursor.. RNaseP catalyzes the removal of the 5'-leader sequence from pre-tRNA to produce the mature 5'-terminus. It can also cleave other RNA substrates such as 4.5S RNA. The protein component plays an auxiliary but essential role in vivo by binding to the 5'-leader sequence and broadening the substrate specificity of the ribozyme. This chain is Ribonuclease P protein component, found in Nitrosomonas eutropha (strain DSM 101675 / C91 / Nm57).